A 97-amino-acid chain; its full sequence is Apolipoprotein C-II (97 aa).

The first 22 residues, 1–22 (MGSRFFLALFLALLVLGNEVQG), serve as a signal peptide directing secretion. The interval 63–71 (SVDEKLRDM) is lipid binding. The interval 75-97 (SSAAMTTYAGIFTDQLLTLLKGE) is lipoprotein lipase cofactor.

Belongs to the apolipoprotein C2 family. In terms of processing, proapolipoprotein C-II is synthesized as a sialic acid containing glycoprotein which is subsequently desialylated prior to its proteolytic processing. Proapolipoprotein C-II, the major form found in plasma undergoes proteolytic cleavage of its N-terminal hexapeptide to generate the mature form apolipoprotein C-II, which occurs as the minor form in plasma.

The protein resides in the secreted. Functionally, component of chylomicrons, very low-density lipoproteins (VLDL), low-density lipoproteins (LDL), and high-density lipoproteins (HDL) in plasma. Plays an important role in lipoprotein metabolism as an activator of lipoprotein lipase. The chain is Apolipoprotein C-II (Apoc2) from Rattus norvegicus (Rat).